The chain runs to 782 residues: Coiled-coil alpha-helical rod protein 1 (782 aa).

2 stretches are compositionally biased toward basic and acidic residues: residues 62–74 (ERDVSSDRQEPGR) and 208–218 (ETRRAGEAKEL). Disordered regions lie at residues 62–82 (ERDVSSDRQEPGRRGRSWGLE) and 182–218 (LTQAHEEALSSLTSKAEGLEKSLSSLETRRAGEAKEL). Coiled coils occupy residues 82–314 (EGSQ…ELTR), 344–437 (LMVQ…NAVS), and 498–691 (VADV…QQEG).

Its subcellular location is the cytoplasm. It is found in the nucleus. May be a regulator of keratinocyte proliferation or differentiation. The protein is Coiled-coil alpha-helical rod protein 1 (CCHCR1) of Pan paniscus (Pygmy chimpanzee).